The primary structure comprises 280 residues: uncharacterized protein (280 aa).

The span at 1–10 shows a compositional bias: basic residues; sequence MSSSIKKLKK. The segment at 1–45 is disordered; the sequence is MSSSIKKLKKDTKDTDKTPSKKIYQETHNSEDSEDSEDSDNENNT. Positions 11–31 are enriched in basic and acidic residues; that stretch reads DTKDTDKTPSKKIYQETHNSE. The span at 32–41 shows a compositional bias: acidic residues; the sequence is DSEDSEDSDN.

This is an uncharacterized protein from Acanthamoeba polyphaga mimivirus (APMV).